Reading from the N-terminus, the 396-residue chain is Homoserine O-acetyltransferase (396 aa).

The AB hydrolase-1 domain occupies 53–370; sequence NAILVCHALT…DRGHDAFLLE (318 aa). Ser-158 (nucleophile) is an active-site residue. Arg-228 serves as a coordination point for substrate. Residues Asp-331 and His-364 contribute to the active site. Asp-365 contributes to the substrate binding site.

The protein belongs to the AB hydrolase superfamily. MetX family. As to quaternary structure, homodimer.

The protein localises to the cytoplasm. It catalyses the reaction L-homoserine + acetyl-CoA = O-acetyl-L-homoserine + CoA. The protein operates within amino-acid biosynthesis; L-methionine biosynthesis via de novo pathway; O-acetyl-L-homoserine from L-homoserine: step 1/1. Functionally, transfers an acetyl group from acetyl-CoA to L-homoserine, forming acetyl-L-homoserine. In Gluconobacter oxydans (strain 621H) (Gluconobacter suboxydans), this protein is Homoserine O-acetyltransferase.